We begin with the raw amino-acid sequence, 428 residues long: MSCYICGRGHHAQRLPFLCPIDARNRLYEGRLAQAHTLIDSDRLKQQTNALIEQPPPTAAKASRSSPAARKAAIDDWASKHQEAIDRTAEIIAQADRLKAEVEAARQEIRQRKKTLARRKSDLAEAADGIEEKRKKQLDKVKDNIAATRADWDLVHESTASNRAFLCMEAARLYGLRRLKKGSSVKYELGGAEVVDLHALTGASPQAITISFSHIVHILNRACQYLAIRLPAEIILPHADYPRPAILSITSSYSYNHDDIPYPGTSDQQSELNTLPQDDLFYQRLPRARPLFIDRPLPVLAKEDPAMYSLFIEGVALLAHDVAWACCSQGVPVGPEDVLHVGRNLYNLLIGNQLLRGVSSNDGGNSTPQMGRYSHGAVHSYLGSAEGSDLVRTFRLPNPIKLADRLKSKLSSDAPNPDWELLEDDAWT.

Positions 82–143 (QEAIDRTAEI…RKKQLDKVKD (62 aa)) form a coiled coil.

It belongs to the ATG14 family. Component of the autophagy-specific VPS34 PI3-kinase complex I.

Its subcellular location is the preautophagosomal structure membrane. It is found in the vacuole membrane. In terms of biological role, required for cytoplasm to vacuole transport (Cvt) and autophagy as a part of the autophagy-specific VPS34 PI3-kinase complex I. This complex is essential to recruit the ATG8-phosphatidylinositol conjugate and the ATG12-ATG5 conjugate to the pre-autophagosomal structure. ATG14 mediates the specific binding of the VPS34 PI3-kinase complex I to the preautophagosomal structure (PAS). Plays a crucial role in hyphal development, conidiogenesis and pathogenicity. Also required for glycogen mobilization, quantity of lipid bodies, and the turgor pressure of appressoria. This Pyricularia oryzae (strain 70-15 / ATCC MYA-4617 / FGSC 8958) (Rice blast fungus) protein is Autophagy-related protein 14.